The following is a 714-amino-acid chain: T-cell activation Rho GTPase-activating protein (714 aa).

Positions 88–277 (QPLSIICGEN…FLIDNCFEIF (190 aa)) constitute a Rho-GAP domain. Disordered regions lie at residues 290 to 357 (DDSL…ESSV), 370 to 419 (QDRR…AEDP), 451 to 508 (QGHI…HSMS), 520 to 563 (RTSS…QSQT), and 623 to 650 (KPST…HRLS). Polar residues predominate over residues 299 to 311 (SDVSTLQNDSAYD). A Phosphoserine modification is found at serine 398. Over residues 459–471 (SRSSPGESLGSSP) the composition is skewed to low complexity. Basic and acidic residues-rich tracts occupy residues 492–501 (KTDKTKPQRE) and 527–545 (EKSK…RKES).

Highly expressed in testis.

May function as a GTPase-activating protein. May play a role in transmission ratio distortion (TRD) in mouse, in which heterozygous males for t-locus transmit their t-carrying chromosome to 95% or more of their offspring. In Mus musculus (Mouse), this protein is T-cell activation Rho GTPase-activating protein (Tagap).